We begin with the raw amino-acid sequence, 891 residues long: Targeting protein for Xklp2 homolog (891 aa).

Positions 42–54 (HENGVPLTFDDKA) are enriched in basic and acidic residues. 5 disordered regions span residues 42 to 310 (HENG…KSCP), 418 to 454 (NLRK…SFSG), 472 to 518 (HTKT…NRHR), 723 to 746 (CSGV…AEKG), and 789 to 891 (STKP…SHTS). Polar residues predominate over residues 108-124 (DDVSSAESETCEMSTDS). The segment covering 141–154 (DDEATVQESSDAEE) has biased composition (acidic residues). Residues 155–173 (TQTLPSSCVDSSTAEMSTD) show a composition bias toward polar residues. The span at 236–246 (PTRKSPRLHSR) shows a compositional bias: basic residues. A compositionally biased stretch (basic and acidic residues) spans 442–454 (DNRKRTHEESFSG). The segment covering 791-802 (KPMTDISNFSLN) has biased composition (polar residues). 2 stretches are compositionally biased toward basic and acidic residues: residues 803–822 (TERR…ERQL) and 831–852 (REAE…DSIH).

This sequence belongs to the TPX2 family. As to expression, detectable in immature oocytes.

The protein resides in the nucleus. The protein localises to the cytoplasm. It localises to the cytoskeleton. It is found in the spindle. Spindle assembly factor. Required for normal assembly of mitotic spindles. The chain is Targeting protein for Xklp2 homolog from Patiria pectinifera (Starfish).